The following is a 316-amino-acid chain: Ribosomal RNA small subunit methyltransferase H (316 aa).

S-adenosyl-L-methionine contacts are provided by residues 35–37 (SGH), Asp-55, Phe-84, Asp-105, and Gln-112.

This sequence belongs to the methyltransferase superfamily. RsmH family.

Its subcellular location is the cytoplasm. The catalysed reaction is cytidine(1402) in 16S rRNA + S-adenosyl-L-methionine = N(4)-methylcytidine(1402) in 16S rRNA + S-adenosyl-L-homocysteine + H(+). Functionally, specifically methylates the N4 position of cytidine in position 1402 (C1402) of 16S rRNA. The protein is Ribosomal RNA small subunit methyltransferase H of Streptococcus equi subsp. zooepidemicus (strain MGCS10565).